A 481-amino-acid chain; its full sequence is RuvB-like helicase 2 (481 aa).

76–83 (GPPSTGKT) serves as a coordination point for ATP.

This sequence belongs to the RuvB family. May form heterododecamers with hel-1/rvb1. Component of the SWR1 chromatin remodeling complex, the INO80 chromatin remodeling complex, and of the R2TP complex.

Its subcellular location is the nucleus. The catalysed reaction is ATP + H2O = ADP + phosphate + H(+). Functionally, DNA helicase which participates in several chromatin remodeling complexes, including the SWR1 and the INO80 complexes. The SWR1 complex mediates the ATP-dependent exchange of histone H2A for the H2A variant H2A.Z leading to transcriptional regulation of selected genes by chromatin remodeling. The INO80 complex remodels chromatin by shifting nucleosomes and is involved in DNA repair. Also involved in pre-rRNA processing. This chain is RuvB-like helicase 2 (hel-2), found in Neurospora crassa (strain ATCC 24698 / 74-OR23-1A / CBS 708.71 / DSM 1257 / FGSC 987).